The primary structure comprises 398 residues: 1-deoxy-D-xylulose 5-phosphate reductoisomerase (398 aa).

NADPH is bound by residues Thr-11, Gly-12, Ser-13, Ile-14, Arg-38, Asn-39, and Asn-125. Residue Lys-126 coordinates 1-deoxy-D-xylulose 5-phosphate. An NADPH-binding site is contributed by Glu-127. Asp-151 serves as a coordination point for Mn(2+). Residues Ser-152, Glu-153, Ser-179, and His-202 each contribute to the 1-deoxy-D-xylulose 5-phosphate site. Glu-153 is a binding site for Mn(2+). Residue Gly-208 coordinates NADPH. 1-deoxy-D-xylulose 5-phosphate is bound by residues Ser-215, Asn-220, Lys-221, and Glu-224. Mn(2+) is bound at residue Glu-224.

The protein belongs to the DXR family. Mg(2+) is required as a cofactor. Mn(2+) serves as cofactor.

The enzyme catalyses 2-C-methyl-D-erythritol 4-phosphate + NADP(+) = 1-deoxy-D-xylulose 5-phosphate + NADPH + H(+). It functions in the pathway isoprenoid biosynthesis; isopentenyl diphosphate biosynthesis via DXP pathway; isopentenyl diphosphate from 1-deoxy-D-xylulose 5-phosphate: step 1/6. In terms of biological role, catalyzes the NADPH-dependent rearrangement and reduction of 1-deoxy-D-xylulose-5-phosphate (DXP) to 2-C-methyl-D-erythritol 4-phosphate (MEP). This chain is 1-deoxy-D-xylulose 5-phosphate reductoisomerase, found in Burkholderia mallei (strain NCTC 10247).